A 45-amino-acid chain; its full sequence is Protamine Z2 (45 aa).

Residues 1–23 (MKCGRKRRRRRRHACKRKKRACK) show a composition bias toward basic residues. Residues 1-26 (MKCGRKRRRRRRHACKRKKRACKQRS) are disordered.

As to expression, testis.

It localises to the nucleus. It is found in the chromosome. Its function is as follows. Protamines substitute for histones in the chromatin of sperm during the haploid phase of spermatogenesis. They compact sperm DNA into a highly condensed, stable and inactive complex. The polypeptide is Protamine Z2 (Scyliorhinus canicula (Small-spotted catshark)).